Consider the following 145-residue polypeptide: MLSVQPKGKQKGCAGCNRKIKDRYLLKALDKYWHEDCLKCACCDCRLGEVGSTLYTKANLILCRRDYLRLFGTTGNCAACSKLIPAFEMVMRARDNVYHLDCFACQLCNQRFCVGDKFFLKNNMILCQTDYEEGLMKEGYAPQVR.

2 consecutive LIM zinc-binding domains span residues 11 to 73 (KGCA…LFGT) and 75 to 137 (GNCA…GLMK).

This is LIM domain only protein 3 (Lmo3) from Rattus norvegicus (Rat).